Reading from the N-terminus, the 911-residue chain is Isoleucine--tRNA ligase (911 aa).

Positions 57-67 match the 'HIGH' region motif; sequence PYANGHIHIGH. Position 564 (Glu-564) interacts with L-isoleucyl-5'-AMP. The 'KMSKS' region motif lies at 605 to 609; sequence KMSKS. Residue Lys-608 participates in ATP binding. Cys-887, Cys-890, Cys-902, and Cys-905 together coordinate Zn(2+).

The protein belongs to the class-I aminoacyl-tRNA synthetase family. IleS type 1 subfamily. As to quaternary structure, monomer. Requires Zn(2+) as cofactor.

The protein localises to the cytoplasm. The catalysed reaction is tRNA(Ile) + L-isoleucine + ATP = L-isoleucyl-tRNA(Ile) + AMP + diphosphate. Catalyzes the attachment of isoleucine to tRNA(Ile). As IleRS can inadvertently accommodate and process structurally similar amino acids such as valine, to avoid such errors it has two additional distinct tRNA(Ile)-dependent editing activities. One activity is designated as 'pretransfer' editing and involves the hydrolysis of activated Val-AMP. The other activity is designated 'posttransfer' editing and involves deacylation of mischarged Val-tRNA(Ile). The protein is Isoleucine--tRNA ligase of Nautilia profundicola (strain ATCC BAA-1463 / DSM 18972 / AmH).